The following is a 304-amino-acid chain: Prephenate dehydratase (304 aa).

In terms of domain architecture, Prephenate dehydratase spans 3-178 (RIAYFGPVGT…ARTRFLLMRR (176 aa)). The ACT domain maps to 193-271 (SIVAAAANRT…DVRFLGSFAR (79 aa)).

The catalysed reaction is prephenate + H(+) = 3-phenylpyruvate + CO2 + H2O. The protein operates within amino-acid biosynthesis; L-phenylalanine biosynthesis; phenylpyruvate from prephenate: step 1/1. This chain is Prephenate dehydratase (pheA), found in Amycolatopsis methanolica.